Reading from the N-terminus, the 842-residue chain is Amyloid-beta A4 precursor protein-binding family A member 1 (842 aa).

Disordered regions lie at residues 1 to 121, 238 to 349, and 366 to 439; these read MNHL…DESA, RLHH…EKRD, and KTRT…KESR. At S82 the chain carries Phosphoserine. 2 stretches are compositionally biased toward basic and acidic residues: residues 106 to 115 and 240 to 258; these read DGYEAERAQD and HHYDERSDGESDSPEKEAE. 6 positions are modified to phosphoserine: S246, S250, S252, S267, S284, and S289. T309 is modified (phosphothreonine). Phosphoserine occurs at positions 317 and 372. T375 carries the phosphothreonine modification. The span at 392-403 shows a compositional bias: basic and acidic residues; it reads PTRDCDDQRPVD. Positions 404–421 are enriched in low complexity; that stretch reads GDSPSPGSSSPLGAESSS. Phosphoserine is present on residues S406, S408, S413, and S573. A PID domain is found at 460–648; the sequence is LIDGIIFAAN…LLNTQDMYND (189 aa). An autoinhibitory helix linker region spans residues 631–648; sequence LSQKEYSDLLNTQDMYND. PDZ domains follow at residues 661–746 and 752–828; these read DVFI…NIVR and TVLI…MPAA.

In terms of assembly, part of a multimeric complex containing STXBP1 and STX1A. Interacts with STXBP1. Component of the brain-specific heterotrimeric complex (LIN-10-LIN-2-LIN-7 complex) composed of at least APBA1, CASK, and LIN7, which associates with the motor protein KIF17 to transport vesicles along microtubules. Within the complex, interacts (via PDZ domain) with the motor protein KIF17; the interaction is direct and is required for association of KIF17 with the cargo that is to be transported. Binds to the cytoplasmic domain of amyloid protein (APP). Interacts (via PDZ 1 and 2 domains) with FSPB. Isoform 3 interacts (via its truncated PID domain) with active, GTP-bound RAB6A. Also interacts with GTP-bound RAB6B. Isoform 3 is expressed in brain.

It is found in the cytoplasm. The protein resides in the perinuclear region. The protein localises to the nucleus. Its subcellular location is the golgi apparatus. Its function is as follows. Putative function in synaptic vesicle exocytosis by binding to Munc18-1, an essential component of the synaptic vesicle exocytotic machinery. May modulate processing of the amyloid-beta precursor protein (APP) and hence formation of AAP-beta. Component of the LIN-10-LIN-2-LIN-7 complex, which associates with the motor protein KIF17 to transport vesicles containing N-methyl-D-aspartate (NMDA) receptor subunit NR2B along microtubules. The protein is Amyloid-beta A4 precursor protein-binding family A member 1 of Mus musculus (Mouse).